The sequence spans 237 residues: Cobalt-precorrin-2 C(20)-methyltransferase (237 aa).

This sequence belongs to the precorrin methyltransferase family. As to quaternary structure, homodimer.

It carries out the reaction Co-precorrin-2 + S-adenosyl-L-methionine = Co-precorrin-3 + S-adenosyl-L-homocysteine + H(+). It functions in the pathway cofactor biosynthesis; adenosylcobalamin biosynthesis; cob(II)yrinate a,c-diamide from sirohydrochlorin (anaerobic route): step 2/10. Its function is as follows. Methylates cobalt-precorrin-2 at the C-20 position to produce cobalt-precorrin-3A in the anaerobic cobalamin biosynthesis pathway. The protein is Cobalt-precorrin-2 C(20)-methyltransferase (cbiL) of Salmonella typhimurium (strain LT2 / SGSC1412 / ATCC 700720).